The primary structure comprises 273 residues: Nitrogenase iron protein 2 (273 aa).

8–15 is an ATP binding site; sequence GKGGIGKS. C95 contributes to the [4Fe-4S] cluster binding site. R98 carries the ADP-ribosylarginine; by dinitrogenase reductase ADP-ribosyltransferase modification. C130 contacts [4Fe-4S] cluster.

This sequence belongs to the NifH/BchL/ChlL family. Homodimer. Requires [4Fe-4S] cluster as cofactor. In terms of processing, the reversible ADP-ribosylation of Arg-98 inactivates the nitrogenase reductase and regulates nitrogenase activity.

It catalyses the reaction N2 + 8 reduced [2Fe-2S]-[ferredoxin] + 16 ATP + 16 H2O = H2 + 8 oxidized [2Fe-2S]-[ferredoxin] + 2 NH4(+) + 16 ADP + 16 phosphate + 6 H(+). The key enzymatic reactions in nitrogen fixation are catalyzed by the nitrogenase complex, which has 2 components: the iron protein and the molybdenum-iron protein. This is Nitrogenase iron protein 2 (nifH2) from Methanosarcina barkeri.